The primary structure comprises 196 residues: Probable malonic semialdehyde reductase RutE (196 aa).

The protein belongs to the nitroreductase family. HadB/RutE subfamily. It depends on FMN as a cofactor.

It carries out the reaction 3-hydroxypropanoate + NADP(+) = 3-oxopropanoate + NADPH + H(+). In terms of biological role, may reduce toxic product malonic semialdehyde to 3-hydroxypropionic acid, which is excreted. The sequence is that of Probable malonic semialdehyde reductase RutE from Shigella sonnei (strain Ss046).